The chain runs to 219 residues: Transmembrane protein 17B (219 aa).

N-linked (GlcNAc...) asparagine glycosylation is present at Asn-26. 4 helical membrane-spanning segments follow: residues 51-71 (MMLYFNAFFFPFWIISEIITM), 84-104 (ILLTTSLVILTLVESLRLYIG), 116-136 (LAGFLILTLLIQLPLLLFLLT), and 147-167 (LAVHMIYLMFINAEIVISFLV). Residues Asn-195 and Asn-203 are each glycosylated (N-linked (GlcNAc...) asparagine).

Belongs to the TMEM17 family. In terms of assembly, part of the tectonic-like complex (also named B9 complex).

It localises to the cell projection. The protein resides in the cilium membrane. Transmembrane component of the tectonic-like complex, a complex localized at the transition zone of primary cilia and acting as a barrier that prevents diffusion of transmembrane proteins between the cilia and plasma membranes. Required for ciliogenesis and sonic hedgehog/SHH signaling. The protein is Transmembrane protein 17B (Tmem17-b) of Xenopus tropicalis (Western clawed frog).